The following is a 269-amino-acid chain: 5'-nucleotidase SurE (269 aa).

Asp-11, Asp-12, Ser-43, and Asn-101 together coordinate a divalent metal cation.

It belongs to the SurE nucleotidase family. It depends on a divalent metal cation as a cofactor.

It localises to the cytoplasm. The catalysed reaction is a ribonucleoside 5'-phosphate + H2O = a ribonucleoside + phosphate. Nucleotidase that shows phosphatase activity on nucleoside 5'-monophosphates. The sequence is that of 5'-nucleotidase SurE from Prochlorococcus marinus (strain MIT 9301).